The following is a 104-amino-acid chain: uncharacterized protein (104 aa).

As to quaternary structure, homodimer.

This is an uncharacterized protein from Bacillus subtilis (strain 168).